Consider the following 1020-residue polypeptide: Protein translocase subunit SecA (1020 aa).

ATP-binding positions include Q99, 117-121 (GEGKT), and D633. The tract at residues 963-992 (NEQPSQEMAADEETQEESKIEENKPEPIVV) is disordered. Basic and acidic residues predominate over residues 978-987 (EESKIEENKP). Zn(2+)-binding residues include C1002, C1004, C1013, and C1014.

It belongs to the SecA family. As to quaternary structure, monomer and homodimer. Part of the essential Sec protein translocation apparatus which comprises SecA, SecYEG and auxiliary proteins SecDF. Other proteins may also be involved. Zn(2+) serves as cofactor.

The protein resides in the cell inner membrane. It localises to the cytoplasm. The enzyme catalyses ATP + H2O + cellular proteinSide 1 = ADP + phosphate + cellular proteinSide 2.. In terms of biological role, part of the Sec protein translocase complex. Interacts with the SecYEG preprotein conducting channel. Has a central role in coupling the hydrolysis of ATP to the transfer of proteins into and across the cell membrane, serving as an ATP-driven molecular motor driving the stepwise translocation of polypeptide chains across the membrane. In Protochlamydia amoebophila (strain UWE25), this protein is Protein translocase subunit SecA.